The sequence spans 78 residues: Defensin-like protein 90 (78 aa).

Positions 1–25 (MTTKMFSYVLLHSLMMFAIILSSMG) are cleaved as a signal peptide. Cystine bridges form between Cys-33–Cys-70, Cys-38–Cys-59, Cys-44–Cys-68, and Cys-48–Cys-69.

This sequence belongs to the DEFL family.

It localises to the secreted. This is Defensin-like protein 90 from Arabidopsis thaliana (Mouse-ear cress).